The following is a 223-amino-acid chain: MRKMGVVIINFKAYKEGFGKRALELAKIAENVASRCDEYVGIAVSFLDLPVIAREVSIDVYAQHVDAVGFGSHTGRINADMIAEYGAKGSLVNHSERRLKLADIEFNVSRLRELGLTSVVCTNNVPTTAAAAALNPDFVAVEPPELIGSGIPVSKAEPEVVENSVKAAKEVNKSVRVLCGAGITTHEDYVKALELGAEGVLLASGVVKAEDQKRALEELVGLL.

10 to 12 lines the substrate pocket; the sequence is NFK. The active-site Electrophile is the histidine 94. The Proton acceptor role is filled by glutamate 142. Substrate-binding positions include isoleucine 147, glycine 182, and 203–204; that span reads AS.

This sequence belongs to the triosephosphate isomerase family. Homotetramer; dimer of dimers.

Its subcellular location is the cytoplasm. The catalysed reaction is D-glyceraldehyde 3-phosphate = dihydroxyacetone phosphate. It functions in the pathway carbohydrate biosynthesis; gluconeogenesis. Its pathway is carbohydrate degradation; glycolysis; D-glyceraldehyde 3-phosphate from glycerone phosphate: step 1/1. Involved in the gluconeogenesis. Catalyzes stereospecifically the conversion of dihydroxyacetone phosphate (DHAP) to D-glyceraldehyde-3-phosphate (G3P). This Archaeoglobus fulgidus (strain ATCC 49558 / DSM 4304 / JCM 9628 / NBRC 100126 / VC-16) protein is Triosephosphate isomerase.